Here is an 84-residue protein sequence, read N- to C-terminus: MMRYSSNKIYFIVYLGGKPVSFGVAKDVDEFERRRENIECLSDKIRVVKVGKKLFKRLRRQILEGEKKDFGMLKVNRRDLNVQV.

This is an uncharacterized protein from Methanocaldococcus jannaschii (strain ATCC 43067 / DSM 2661 / JAL-1 / JCM 10045 / NBRC 100440) (Methanococcus jannaschii).